The chain runs to 56 residues: Large ribosomal subunit protein bL33 (56 aa).

It belongs to the bacterial ribosomal protein bL33 family.

This Rickettsia prowazekii (strain Madrid E) protein is Large ribosomal subunit protein bL33 (rpmG).